Reading from the N-terminus, the 859-residue chain is MARRWSTKESPRWRSALLLLFLAGVYGNGALAEHSENVHISGVSTACGETPEQIRAPSGIITSPGWPSEYPAKINCSWFIRANPGEIITISFQDFDIQGSRRCNLDWLTIETYKNIESYRACGSTIPPPYISSQDHIWIRFHSDDNISRKGFRLAYFSGKSEEPNCACDQFRCGNGKCIPEAWKCNNMDECGDSSDEEICAKEANPPTAAAFQPCAYNQFQCLSRFTKVYTCLPESLKCDGNIDCLDLGDEIDCDVPTCGQWLKYFYGTFNSPNYPDFYPPGSNCTWLIDTGDHRKVILRFTDFKLDGTGYGDYVKIYDGLEENPHKLLRVLTAFDSHAPLTVVSSSGQIRVHFCADKVNAARGFNATYQVDGFCLPWEIPCGGNWGCYTEQQRCDGYWHCPNGRDEINCTMCQKEEFPCSRNGVCYPRSDRCNYQNHCPNGSDEKNCFFCQPGNFHCKNNRCVFESWVCDSQDDCGDGSDEENCPVIVPTRVITAAVIGSLICGLLLVIALGCTCKLYSLRMFERRSFETQLSRVEAELLRREAPPSYGQLIAQGLIPPVEDFPVCSPNQASVLENLRLAVRSQLGFTSVRLPMAGRSSNIWNRIFNFARSRHSGSLALVSADGDEVVPSQSTSREPERNHTHRSLFSVESDDTDTENERRDMAGASGGVAAPLPQKVPPTTAVEATVGACASSSTQSTRGGHADNGRDVTSVEPPSVSPARHQLTSALSRMTQGLRWVRFTLGRSSSVSQNQSPLRQLDNGVSGREDDDDVEMLIPISDGSSDFDVNDCSRPLLDLASDQGQGLRQPYNATNPGVRPSNRDGPCERCGIVHTAQIPDTCLEVTLKNETSDDEALLLC.

A signal peptide spans 1–32; it reads MARRWSTKESPRWRSALLLLFLAGVYGNGALA. The Extracellular segment spans residues 33–492; that stretch reads EHSENVHISG…ENCPVIVPTR (460 aa). Disulfide bonds link Cys-47–Cys-76 and Cys-103–Cys-122. In terms of domain architecture, CUB 1 spans 47-159; that stretch reads CGETPEQIRA…KGFRLAYFSG (113 aa). The N-linked (GlcNAc...) asparagine glycan is linked to Asn-75. The N-linked (GlcNAc...) asparagine glycan is linked to Asn-146. LDL-receptor class A domains are found at residues 165–201 and 214–255; these read NCAC…EICA and PCAY…IDCD. 7 disulfide bridges follow: Cys-166–Cys-178, Cys-173–Cys-191, Cys-185–Cys-200, Cys-215–Cys-232, Cys-222–Cys-245, Cys-239–Cys-254, and Cys-259–Cys-285. A CUB 2 domain is found at 259 to 372; that stretch reads CGQWLKYFYG…RGFNATYQVD (114 aa). 2 N-linked (GlcNAc...) asparagine glycosylation sites follow: Asn-284 and Asn-366. 3 LDL-receptor class A domains span residues 374 to 411, 412 to 449, and 450 to 486; these read FCLP…INCT, MCQK…KNCF, and FCQP…ENCP. 9 disulfide bridges follow: Cys-375–Cys-388, Cys-382–Cys-401, Cys-395–Cys-410, Cys-413–Cys-426, Cys-420–Cys-439, Cys-433–Cys-448, Cys-451–Cys-463, Cys-458–Cys-476, and Cys-470–Cys-485. Asn-409 carries N-linked (GlcNAc...) asparagine glycosylation. Asn-441 is a glycosylation site (N-linked (GlcNAc...) asparagine). Residues 493 to 513 traverse the membrane as a helical segment; sequence VITAAVIGSLICGLLLVIALG. Topologically, residues 514 to 859 are cytoplasmic; the sequence is CTCKLYSLRM…TSDDEALLLC (346 aa). Disordered stretches follow at residues 623 to 678, 693 to 723, 748 to 770, and 802 to 823; these read ADGD…LPQK, ASSS…SPAR, SSVS…REDD, and QGQG…SNRD. 2 stretches are compositionally biased toward polar residues: residues 748–757 and 802–814; these read SSVSQNQSPL and QGQG…NATN.

The protein belongs to the LDLR family. May interact with RACK1, ZFYVE9 and NMRK2.

Its subcellular location is the membrane. The protein resides in the coated pit. Its function is as follows. Probable receptor, which may be involved in the internalization of lipophilic molecules and/or signal transduction. May act as a tumor suppressor. The chain is Low-density lipoprotein receptor-related protein 12 (LRP12) from Pongo abelii (Sumatran orangutan).